Consider the following 45-residue polypeptide: Bomanin Short 1 (45 aa).

Positions 1–20 (MKFFSVVTVFVLGLLAVANA) are cleaved as a signal peptide. The propeptide at 21 to 27 (VPLSPDP) is removed by a dipeptidylpeptidase. Cys-36 and Cys-39 form a disulfide bridge. Gly-43 is modified (glycine amide).

As to expression, hemolymph (at protein level).

The protein localises to the secreted. Secreted immune-induced peptide induced by Toll signaling. Has a role in resistance to bacterial and fungal infections. Has no activity against the fungus C.glabrata in vitro. The polypeptide is Bomanin Short 1 (Drosophila melanogaster (Fruit fly)).